A 780-amino-acid polypeptide reads, in one-letter code: TSC22 domain family protein 2 (780 aa).

Disordered stretches follow at residues 20–86 (AQVA…TVSP), 126–158 (TSAP…PTTC), 235–499 (AHGP…PGGP), 587–607 (LVGQ…PPLS), and 736–780 (LSSN…VSSA). Residues 28-37 (EDTESLDDPD) show a composition bias toward acidic residues. A compositionally biased stretch (low complexity) spans 126-146 (TSAPAPGAPGGPQLAGSSAGP). Polar residues predominate over residues 241 to 262 (GTDSSLTAVSQLPPSEKMSQPT). Low complexity-rich tracts occupy residues 297–316 (GAAT…QPQG), 344–361 (PAVG…AYPQ), and 395–412 (QPSS…ATLP). A compositionally biased stretch (polar residues) spans 415–434 (TGQNASSVGAQLMGASSQPS). The segment covering 453–468 (QPTGVPPATVGGVVQP) has biased composition (low complexity). Residues 736–756 (LSSNDQLSQLPTQQANPGSTS) are compositionally biased toward polar residues. Residues 765–774 (PPQPTQPPQQ) show a composition bias toward pro residues.

Belongs to the TSC-22/Dip/Bun family. Interacts with NRBP1. Interacts with PKM isoform M2; the interaction results in reduced nuclear levels of PKM isoform M2, leading to repression of cyclin CCND1 transcription and reduced cell growth. Interacts with WDR77.

Functionally, reduces the level of nuclear PKM isoform M2 which results in repression of cyclin CCND1 transcription and reduced cell growth. In Homo sapiens (Human), this protein is TSC22 domain family protein 2.